The sequence spans 142 residues: uncharacterized protein (142 aa).

The segment at 1 to 22 (MSGSVNQNTDQHSQDSSSTPNN) is disordered. The next 2 helical transmembrane spans lie at 63–83 (LFVM…VLLV) and 109–129 (IIDG…FVDL).

It is found in the membrane. This is an uncharacterized protein from Acanthamoeba polyphaga mimivirus (APMV).